Reading from the N-terminus, the 489-residue chain is Glycogen synthase (489 aa).

Lys15 serves as a coordination point for ADP-alpha-D-glucose.

It belongs to the glycosyltransferase 1 family. Bacterial/plant glycogen synthase subfamily.

It catalyses the reaction [(1-&gt;4)-alpha-D-glucosyl](n) + ADP-alpha-D-glucose = [(1-&gt;4)-alpha-D-glucosyl](n+1) + ADP + H(+). It participates in glycan biosynthesis; glycogen biosynthesis. Synthesizes alpha-1,4-glucan chains using ADP-glucose. The chain is Glycogen synthase from Francisella tularensis subsp. tularensis (strain SCHU S4 / Schu 4).